Consider the following 295-residue polypeptide: ATP synthase gamma chain (295 aa).

This sequence belongs to the ATPase gamma chain family. As to quaternary structure, F-type ATPases have 2 components, CF(1) - the catalytic core - and CF(0) - the membrane proton channel. CF(1) has five subunits: alpha(3), beta(3), gamma(1), delta(1), epsilon(1). CF(0) has three main subunits: a, b and c.

The protein localises to the cell inner membrane. Produces ATP from ADP in the presence of a proton gradient across the membrane. The gamma chain is believed to be important in regulating ATPase activity and the flow of protons through the CF(0) complex. In Bdellovibrio bacteriovorus (strain ATCC 15356 / DSM 50701 / NCIMB 9529 / HD100), this protein is ATP synthase gamma chain.